The following is a 754-amino-acid chain: uncharacterized protein (754 aa).

Residues 1–110 (MNKGQNQVVP…RNMLGSLQKT (110 aa)) are disordered. A compositionally biased stretch (polar residues) spans 15-25 (FGGQNPPQLSS). The segment covering 26-35 (IPPIVNPVVV) has biased composition (low complexity). Residues 36–46 (QNRTSPGTPFI) are compositionally biased toward polar residues. Residues 49–60 (KAKEIYNRRQQE) show a composition bias toward basic and acidic residues. Over residues 62-72 (ISSDSEEEESP) the composition is skewed to acidic residues. A compositionally biased stretch (basic and acidic residues) spans 76–93 (AKSKYSRDSRDSRDTRDS).

It localises to the virion. This is an uncharacterized protein from Acanthamoeba polyphaga mimivirus (APMV).